Here is a 241-residue protein sequence, read N- to C-terminus: Orotidine 5'-phosphate decarboxylase (241 aa).

Residues aspartate 16, lysine 37, 64 to 73 (DLKFHDIPTT), threonine 128, arginine 190, glutamine 199, glycine 219, and arginine 220 contribute to the substrate site. The Proton donor role is filled by lysine 66.

Belongs to the OMP decarboxylase family. Type 1 subfamily. As to quaternary structure, homodimer.

The catalysed reaction is orotidine 5'-phosphate + H(+) = UMP + CO2. Its pathway is pyrimidine metabolism; UMP biosynthesis via de novo pathway; UMP from orotate: step 2/2. Functionally, catalyzes the decarboxylation of orotidine 5'-monophosphate (OMP) to uridine 5'-monophosphate (UMP). The protein is Orotidine 5'-phosphate decarboxylase of Prochlorococcus marinus (strain NATL1A).